Consider the following 533-residue polypeptide: CEP295 N-terminal-like protein (533 aa).

Disordered stretches follow at residues Met1–Gln40, Arg84–Arg176, Leu286–Glu333, and Ala370–Glu399. Residues Gln40–Leu72 adopt a coiled-coil conformation. Basic and acidic residues predominate over residues Lys107–Arg126. The stretch at Met416 to Lys531 forms a coiled coil.

Expressed in mature spermatozoa (at protein level). Detected in retina, lung and kidney. In brain, highly expressed in brain-stem, cerebral cortex and thalamus with lesser expression in cerebellum and hippocampus.

The protein localises to the cell projection. The protein resides in the cilium. This chain is CEP295 N-terminal-like protein, found in Mus musculus (Mouse).